Here is a 420-residue protein sequence, read N- to C-terminus: Protein Rv2184c (420 aa).

It belongs to the arsA ATPase family.

The protein is Protein Rv2184c of Mycobacterium tuberculosis (strain ATCC 25618 / H37Rv).